We begin with the raw amino-acid sequence, 235 residues long: Octanoyltransferase (235 aa).

The 184-residue stretch at 37-220 (AGGPDTLLLL…AVNDALDGWL (184 aa)) folds into the BPL/LPL catalytic domain. Substrate is bound by residues 78–85 (RGGKITWH), 150–152 (AIG), and 163–165 (GFA). Cys-181 (acyl-thioester intermediate) is an active-site residue.

Belongs to the LipB family.

The protein localises to the cytoplasm. The enzyme catalyses octanoyl-[ACP] + L-lysyl-[protein] = N(6)-octanoyl-L-lysyl-[protein] + holo-[ACP] + H(+). The protein operates within protein modification; protein lipoylation via endogenous pathway; protein N(6)-(lipoyl)lysine from octanoyl-[acyl-carrier-protein]: step 1/2. In terms of biological role, catalyzes the transfer of endogenously produced octanoic acid from octanoyl-acyl-carrier-protein onto the lipoyl domains of lipoate-dependent enzymes. Lipoyl-ACP can also act as a substrate although octanoyl-ACP is likely to be the physiological substrate. In Mycobacterium leprae (strain Br4923), this protein is Octanoyltransferase.